Consider the following 592-residue polypeptide: Glutathione-regulated potassium-efflux system protein KefB (592 aa).

13 consecutive transmembrane segments (helical) span residues serine 4–alanine 24, isoleucine 29–phenylalanine 49, glutamate 55–leucine 75, isoleucine 87–methionine 107, alanine 115–methionine 135, valine 152–glycine 172, histidine 177–glycine 197, phenylalanine 207–glycine 227, leucine 230–leucine 250, glycine 268–tyrosine 288, leucine 291–leucine 311, methionine 324–alanine 344, and alanine 356–valine 376. The RCK N-terminal domain maps to lysine 400–threonine 519.

The protein belongs to the monovalent cation:proton antiporter 2 (CPA2) transporter (TC 2.A.37) family. KefB subfamily. As to quaternary structure, interacts with the regulatory subunit KefG.

The protein localises to the cell inner membrane. In terms of biological role, pore-forming subunit of a potassium efflux system that confers protection against electrophiles. Catalyzes K(+)/H(+) antiport. The protein is Glutathione-regulated potassium-efflux system protein KefB of Escherichia coli O157:H7.